The sequence spans 203 residues: Kunitz trypsin inhibitor 6 (203 aa).

The signal sequence occupies residues 1–21 (MKTFQLMMISFLFVAITTTSG). Cys70 and Cys115 are oxidised to a cystine. 5 N-linked (GlcNAc...) asparagine glycosylation sites follow: Asn94, Asn127, Asn136, Asn144, and Asn197.

It belongs to the protease inhibitor I3 (leguminous Kunitz-type inhibitor) family.

Functionally, exhibits Kunitz trypsin protease inhibitor activity. This is Kunitz trypsin inhibitor 6 from Arabidopsis thaliana (Mouse-ear cress).